Consider the following 425-residue polypeptide: Non-structural protein 2 (425 aa).

Residues V29–T64 are a coiled coil.

The sequence is that of Non-structural protein 2 (Segment-6) from Banna virus (BAV).